The primary structure comprises 1197 residues: Disease resistance-like protein CSA1 (1197 aa).

A TIR domain is found at 15 to 178 (PQDQVFINFR…IIIRKVKEIL (164 aa)). Glu89 is a catalytic residue. An NB-ARC domain is found at 210-480 (RIKQLEEKLR…ACFRSQDENY (271 aa)). LRR repeat units lie at residues 614 to 636 (LNEV…DFNP), 638 to 659 (NLVD…NKDA), 694 to 716 (TALK…NLRG), 728 to 749 (LISL…QVIS), 750 to 774 (DKLE…RLQR), 776 to 796 (VMLN…LGQL), 797 to 819 (KALE…TWGN), 820 to 843 (MSRL…LSVR), 845 to 862 (LCLN…LLNK), and 863 to 889 (FSQL…NLQY).

It carries out the reaction NAD(+) + H2O = ADP-D-ribose + nicotinamide + H(+). In terms of biological role, TIR-NB-LRR receptor-like protein that functions in photomorphogenic development. May function downstream of phytochrome B (phyB) signaling. The chain is Disease resistance-like protein CSA1 from Arabidopsis thaliana (Mouse-ear cress).